The chain runs to 557 residues: Nicotinate phosphoribosyltransferase 2 (557 aa).

Nicotinate-binding residues include Y31 and T219. The residue at position 222 (H222) is a Phosphohistidine. Residue R329 participates in nicotinate binding. A 5-phospho-alpha-D-ribose 1-diphosphate-binding site is contributed by T391.

The protein belongs to the NAPRTase family. Mg(2+) serves as cofactor. Requires Mn(2+) as cofactor. In terms of processing, transiently phosphorylated on a His residue during the reaction cycle. Phosphorylation strongly increases the affinity for substrates and increases the rate of nicotinate D-ribonucleotide production. Dephosphorylation regenerates the low-affinity form of the enzyme, leading to product release.

The catalysed reaction is nicotinate + 5-phospho-alpha-D-ribose 1-diphosphate + ATP + H2O = nicotinate beta-D-ribonucleotide + ADP + phosphate + diphosphate. It participates in cofactor biosynthesis; NAD(+) biosynthesis; nicotinate D-ribonucleotide from nicotinate: step 1/1. Functionally, catalyzes the first step in the biosynthesis of NAD from nicotinic acid, the ATP-dependent synthesis of beta-nicotinate D-ribonucleotide from nicotinate and 5-phospho-D-ribose 1-phosphate. Helps prevent cellular oxidative stress via its role in NAD biosynthesis. The sequence is that of Nicotinate phosphoribosyltransferase 2 from Arabidopsis thaliana (Mouse-ear cress).